The primary structure comprises 428 residues: Adenylosuccinate synthetase 1 (428 aa).

GTP is bound by residues 12–18 and 40–42; these read GDEGKGK and GHT. The Proton acceptor role is filled by aspartate 13. Mg(2+)-binding residues include aspartate 13 and glycine 40. Residues 13-16, 38-41, threonine 133, arginine 147, asparagine 224, threonine 239, and arginine 303 each bind IMP; these read DEGK and NAGH. Histidine 41 serves as the catalytic Proton donor. Residue 299–305 coordinates substrate; that stretch reads TTTGRRR. GTP is bound by residues arginine 305, 331–333, and 413–415; these read KLD and GVG.

The protein belongs to the adenylosuccinate synthetase family. As to quaternary structure, homodimer. Mg(2+) serves as cofactor.

Its subcellular location is the cytoplasm. It carries out the reaction IMP + L-aspartate + GTP = N(6)-(1,2-dicarboxyethyl)-AMP + GDP + phosphate + 2 H(+). It participates in purine metabolism; AMP biosynthesis via de novo pathway; AMP from IMP: step 1/2. Functionally, plays an important role in the de novo pathway and in the salvage pathway of purine nucleotide biosynthesis. Catalyzes the first committed step in the biosynthesis of AMP from IMP. The sequence is that of Adenylosuccinate synthetase 1 from Laccaria bicolor (strain S238N-H82 / ATCC MYA-4686) (Bicoloured deceiver).